A 703-amino-acid polypeptide reads, in one-letter code: Protein FAR1-RELATED SEQUENCE 6 (703 aa).

Positions 1-29 (MERSESVDEDVQASAYLENDEVRERDDPM) are disordered. In terms of domain architecture, FAR1 spans 99-184 (NYYNCYASEV…TLDHNHLLGC (86 aa)). Residues 297–392 (VIFIDSSYIS…SLTHIMRKIP (96 aa)) enclose the MULE domain. The SWIM-type zinc finger occupies 584 to 620 (FEVLYNRSVGEVRCICSCFNFYGYLCRHALCVLNFNG).

It belongs to the FHY3/FAR1 family. In terms of tissue distribution, expressed in hypocotyls, rosette and cauline leaves, inflorescences stems, flowers and siliques.

It is found in the nucleus. Functionally, putative transcription activator involved in regulating light control of development. May have a role in controlling flowering time. In Arabidopsis thaliana (Mouse-ear cress), this protein is Protein FAR1-RELATED SEQUENCE 6 (FRS6).